Consider the following 277-residue polypeptide: Shikimate dehydrogenase (NADP(+)) (277 aa).

Shikimate is bound by residues 17–19 and T64; that span reads SRS. The active-site Proton acceptor is the K68. The shikimate site is built by N88 and D103. NADP(+) is bound by residues 128 to 132, 152 to 157, and L217; these read GAGGS and NRTLDR. Y219 serves as a coordination point for shikimate. NADP(+) is bound at residue G240.

It belongs to the shikimate dehydrogenase family. Homodimer.

The enzyme catalyses shikimate + NADP(+) = 3-dehydroshikimate + NADPH + H(+). It participates in metabolic intermediate biosynthesis; chorismate biosynthesis; chorismate from D-erythrose 4-phosphate and phosphoenolpyruvate: step 4/7. Involved in the biosynthesis of the chorismate, which leads to the biosynthesis of aromatic amino acids. Catalyzes the reversible NADPH linked reduction of 3-dehydroshikimate (DHSA) to yield shikimate (SA). This is Shikimate dehydrogenase (NADP(+)) from Rhodopseudomonas palustris (strain BisB18).